The chain runs to 638 residues: Growth hormone receptor (638 aa).

Residues Met1–Ala18 form the signal peptide. Residues Phe19–Tyr264 lie on the Extracellular side of the membrane. Asn46 carries an N-linked (GlcNAc...) asparagine glycan. Intrachain disulfides connect Cys56-Cys66 and Cys101-Cys112. N-linked (GlcNAc...) asparagine glycosylation is present at Asn115. An intrachain disulfide couples Cys126 to Cys140. The region spanning Pro151–Met254 is the Fibronectin type-III domain. Asn156, Asn161, and Asn200 each carry an N-linked (GlcNAc...) asparagine glycan. Residues Tyr240–Ser244 carry the WSXWS motif motif. A helical membrane pass occupies residues Phe265 to Ser288. Residues Lys289–Pro638 lie on the Cytoplasmic side of the membrane. Residues Lys294–Val379 form a required for JAK2 binding region. The short motif at Ile297 to Lys305 is the Box 1 motif element. The short motif at Asp340–Asp349 is the UbE motif element. Ser341 is subject to Phosphoserine. Positions Pro353–Ser388 are disordered. The span at Lys356–Lys372 shows a compositional bias: basic and acidic residues. Phosphotyrosine is present on residues Tyr487 and Tyr595.

It belongs to the type I cytokine receptor family. Type 1 subfamily. As to quaternary structure, on growth hormone (GH) binding, forms homodimers and binds JAK2 via a box 1-containing domain. The soluble form (GHBP) is produced by phorbol ester-promoted proteolytic cleavage at the cell surface (shedding) by ADAM17/TACE. Shedding is inhibited by growth hormone (GH) binding to the receptor probably due to a conformational change in GHR rendering the receptor inaccessible to ADAM17. In terms of processing, on GH binding, phosphorylated on tyrosine residues in the cytoplasmic domain by JAK2. Post-translationally, ubiquitinated by the ECS(SOCS2) complex following ligand-binding and phosphorylation by JAK2, leading to its degradation by the proteasome. Regulation by the ECS(SOCS2) complex acts as a negative feedback loop of growth hormone receptor signaling. Ubiquitination is not sufficient for GHR internalization.

Its subcellular location is the cell membrane. The protein resides in the secreted. In terms of biological role, receptor for pituitary gland growth hormone (GH1) involved in regulating postnatal body growth. On ligand binding, couples to the JAK2/STAT5 pathway. Its function is as follows. The soluble form (GHBP) acts as a reservoir of growth hormone in plasma and may be a modulator/inhibitor of GH signaling. The sequence is that of Growth hormone receptor (GHR) from Macaca mulatta (Rhesus macaque).